We begin with the raw amino-acid sequence, 258 residues long: Imidazole glycerol phosphate synthase subunit HisF (258 aa).

Residues Asp-11 and Asp-130 contribute to the active site.

The protein belongs to the HisA/HisF family. As to quaternary structure, heterodimer of HisH and HisF.

The protein resides in the cytoplasm. The catalysed reaction is 5-[(5-phospho-1-deoxy-D-ribulos-1-ylimino)methylamino]-1-(5-phospho-beta-D-ribosyl)imidazole-4-carboxamide + L-glutamine = D-erythro-1-(imidazol-4-yl)glycerol 3-phosphate + 5-amino-1-(5-phospho-beta-D-ribosyl)imidazole-4-carboxamide + L-glutamate + H(+). It participates in amino-acid biosynthesis; L-histidine biosynthesis; L-histidine from 5-phospho-alpha-D-ribose 1-diphosphate: step 5/9. Its function is as follows. IGPS catalyzes the conversion of PRFAR and glutamine to IGP, AICAR and glutamate. The HisF subunit catalyzes the cyclization activity that produces IGP and AICAR from PRFAR using the ammonia provided by the HisH subunit. In Serratia proteamaculans (strain 568), this protein is Imidazole glycerol phosphate synthase subunit HisF.